Reading from the N-terminus, the 626-residue chain is Polyphenol oxidase C, chloroplastic (626 aa).

Residues 1 to 83 constitute a chloroplast transit peptide; it reads MASLCSNSST…ANAIPLAASA (83 aa). Cystine bridges form between Cys-94-Cys-110 and Cys-109-Cys-177. Residues His-176, His-194, His-203, His-324, His-328, and His-366 each contribute to the Cu cation site. Residues 180 to 194 constitute a cross-link (2'-(S-cysteinyl)-histidine (Cys-His)); the sequence is CNGGYSIDGKVLQVH.

This sequence belongs to the tyrosinase family. Cu(2+) is required as a cofactor.

It is found in the plastid. Its subcellular location is the chloroplast thylakoid lumen. The catalysed reaction is 2 catechol + O2 = 2 1,2-benzoquinone + 2 H2O. Catalyzes the oxidation of mono- and o-diphenols to o-diquinones. This is Polyphenol oxidase C, chloroplastic from Solanum lycopersicum (Tomato).